A 183-amino-acid polypeptide reads, in one-letter code: Gamma-crystallin N (183 aa).

Beta/gamma crystallin 'Greek key' domains follow at residues 6 to 46 (GKIT…RVES), 47 to 89 (GAWV…RPVG), 95 to 136 (FRID…KVYG), and 138 to 180 (GAWV…RRVL).

It belongs to the beta/gamma-crystallin family. Monomer. As to expression, detected in the auditory hindbrain where it is highly expressed in the medial nucleus of the trapezoid body, but also present in other nuclei of the superior olivary complex.

In terms of biological role, crystallins are the dominant structural components of the vertebrate eye lens. Also plays an important role for integrity and function of auditory nuclei. This chain is Gamma-crystallin N, found in Rattus norvegicus (Rat).